A 357-amino-acid chain; its full sequence is Large ribosomal subunit protein uL10 (357 aa).

The tract at residues 311-357 (MVSRSAEAAERKEKEEEEEEEAEEEEAEEEEEEEEEEAAAGLGALFG) is disordered. The span at 325–348 (EEEEEEEAEEEEAEEEEEEEEEEA) shows a compositional bias: acidic residues.

The protein belongs to the universal ribosomal protein uL10 family. As to quaternary structure, part of the 50S ribosomal subunit. Forms part of the ribosomal stalk which helps the ribosome interact with GTP-bound translation factors. Forms a heptameric L10(L12)2(L12)2(L12)2 complex, where L10 forms an elongated spine to which the L12 dimers bind in a sequential fashion.

Functionally, forms part of the ribosomal stalk, playing a central role in the interaction of the ribosome with GTP-bound translation factors. This chain is Large ribosomal subunit protein uL10, found in Methanopyrus kandleri (strain AV19 / DSM 6324 / JCM 9639 / NBRC 100938).